The chain runs to 551 residues: PA-phosphatase related-family protein DDB_G0268928 (551 aa).

Composition is skewed to polar residues over residues 26-47 and 137-152; these read TESL…SGKD and KYNT…SSNK. Disordered stretches follow at residues 26 to 50 and 123 to 172; these read TESL…DYSS and KGED…NNNN. Low complexity predominate over residues 153 to 171; sequence TQTTVLNNSTTSSNNINNN. 7 helical membrane passes run 211–231, 232–252, 273–293, 346–366, 393–413, 474–494, and 500–520; these read SYSD…SIIY, SLLV…LVFI, LAVG…AVVL, ILQL…IYIL, MFIC…LIFP, ILPA…IATM, and YFVD…YGGF.

Belongs to the PA-phosphatase related phosphoesterase family.

The protein resides in the membrane. The polypeptide is PA-phosphatase related-family protein DDB_G0268928 (Dictyostelium discoideum (Social amoeba)).